The chain runs to 875 residues: Phosphoenolpyruvate carboxylase (875 aa).

Catalysis depends on residues histidine 137 and lysine 542.

It belongs to the PEPCase type 1 family. Requires Mg(2+) as cofactor.

The enzyme catalyses oxaloacetate + phosphate = phosphoenolpyruvate + hydrogencarbonate. In terms of biological role, forms oxaloacetate, a four-carbon dicarboxylic acid source for the tricarboxylic acid cycle. This is Phosphoenolpyruvate carboxylase from Pseudomonas putida (strain ATCC 47054 / DSM 6125 / CFBP 8728 / NCIMB 11950 / KT2440).